We begin with the raw amino-acid sequence, 452 residues long: MNKVKIGEKYEVDITSMGHEGEGVGRIDGIAVFVKGALKGERVIVEIEEVHKNYLKGYTVKILEKSQHRVNPLCQYADRCGGCSLQHLSYKGQLEYKTQKVKDNLERIGKIYTKVHYAIGMENPLNYRNKGQFVVGEIGREKITGFYSFHSHEIVPVDNCLIQHPLSNKVVSVVKEWLNECDISVYDRKKGKGLIRHVVAKVAFKTGEVMAIIVINGEDIPCKEELIEALKEKVPGLKSVILNINTRRTKMILGNKNIVIYGKNTIEDFIKDLRFEISPLSFFQVNPIQTEILYDKAIEYAGLTGKEVVIDVYSGIGTISLFAAKKASFVYGIESVKEAVEDAEKNAQVNGVKNVKFIWGKAEREIAKLYKEGVKAEVVIVDPPRDGCDKEVIRAIVGINPKRIVYVSCNPSTLARDLRYLEDAGYRTVEVQPVDMFPYTYHVESVALVERM.

The TRAM domain maps to K3–K61. [4Fe-4S] cluster-binding residues include C74, C80, C83, and C160. Residues Q284, Y313, E334, and D382 each contribute to the S-adenosyl-L-methionine site. C409 (nucleophile) is an active-site residue.

It belongs to the class I-like SAM-binding methyltransferase superfamily. RNA M5U methyltransferase family.

This is an uncharacterized protein from Caldanaerobacter subterraneus subsp. tengcongensis (strain DSM 15242 / JCM 11007 / NBRC 100824 / MB4) (Thermoanaerobacter tengcongensis).